A 364-amino-acid chain; its full sequence is Thymidine kinase (364 aa).

ATP is bound at residue 36–43 (GPFGVGKT). E64 acts as the Proton acceptor in catalysis. Residue Q108 coordinates substrate. R201 is an ATP binding site. R207 provides a ligand contact to substrate.

This sequence belongs to the herpesviridae thymidine kinase family. As to quaternary structure, homodimer.

It catalyses the reaction thymidine + ATP = dTMP + ADP + H(+). Functionally, catalyzes the transfer of the gamma-phospho group of ATP to thymidine to generate dTMP in the salvage pathway of pyrimidine synthesis. The dTMP serves as a substrate for DNA polymerase during viral DNA replication. Allows the virus to be reactivated and to grow in non-proliferative cells lacking a high concentration of phosphorylated nucleic acid precursors. This chain is Thymidine kinase, found in Infectious laryngotracheitis virus (strain Thorne V882) (ILTV).